The chain runs to 348 residues: Phosphoribosylformylglycinamidine cyclo-ligase (348 aa).

It belongs to the AIR synthase family.

Its subcellular location is the cytoplasm. The enzyme catalyses 2-formamido-N(1)-(5-O-phospho-beta-D-ribosyl)acetamidine + ATP = 5-amino-1-(5-phospho-beta-D-ribosyl)imidazole + ADP + phosphate + H(+). The protein operates within purine metabolism; IMP biosynthesis via de novo pathway; 5-amino-1-(5-phospho-D-ribosyl)imidazole from N(2)-formyl-N(1)-(5-phospho-D-ribosyl)glycinamide: step 2/2. The sequence is that of Phosphoribosylformylglycinamidine cyclo-ligase from Ruegeria sp. (strain TM1040) (Silicibacter sp.).